The chain runs to 195 residues: HTH-type transcriptional regulator BetI (195 aa).

The 61-residue stretch at 8 to 68 (SIRRRQLIDA…ATMRDITSQL (61 aa)) folds into the HTH tetR-type domain. Residues 31–50 (TIAQIARRAGVSTGIISHYF) constitute a DNA-binding region (H-T-H motif).

It participates in amine and polyamine biosynthesis; betaine biosynthesis via choline pathway [regulation]. Functionally, repressor involved in the biosynthesis of the osmoprotectant glycine betaine. It represses transcription of the choline transporter BetT and the genes of BetAB involved in the synthesis of glycine betaine. The sequence is that of HTH-type transcriptional regulator BetI from Escherichia coli (strain UTI89 / UPEC).